The following is a 293-amino-acid chain: Short-chain dehydrogenase/reductase PhomF' (293 aa).

Ile31 and Asn102 together coordinate NADP(+). The active-site Proton donor is Ser175. NADP(+) contacts are provided by Tyr190, Lys194, and Ser225. Tyr190 acts as the Proton acceptor in catalysis. Lys194 (lowers pKa of active site Tyr) is an active-site residue.

The protein belongs to the short-chain dehydrogenases/reductases (SDR) family.

In terms of biological role, short-chain dehydrogenase/reductase; part of the gene cluster that mediates the biosynthesis of the phomopsins, a group of hexapeptide mycotoxins which infects lupins and causes lupinosis disease in livestock. The role of phomF' within the phomopsins biosynthesis pathway has still to be determined. The pathway starts with the processing of the precursor phomA by several endopeptidases including kexin proteases as well as the cluster-specific S41 family peptidase phomP1 and the oligopeptidase phomG to produce 10 identical copies of the hexapeptide Tyr-Val-Ile-Pro-Ile-Asp. After being excised from the precursor peptide, the core peptides are cyclized and modified post-translationally by enzymes encoded within the gene cluster. The timing and order of proteolysis of the phomA precursor and PTMs are still unknown. Two tyrosinase-like enzymes, phomQ1 and phomQ2, catalyze the chlorination and hydroxylation of Tyr, respectively. PhomYb, is proposed to be involved in the construction of the macrocyclic structure. The other 4 ustYa family proteins may be involved in PTMs that generate the unique structure of phomopsin A. PhomYa is required for the hydroxylation of C-beta of Tyr. PhomYc, phomYd, and phomYe are responsible for the biosynthesis of 2,3-dehydroisoleucine (dIle), 2,3-dehydroaspartic acid (dAsp), and 3,4-dehydroproline (dPro), respectively. While dIle formation by phomYc is indispensable for the installation of dAsp by phomYd, the order of the other PTMs have not been elucidated yet. Most of the biosynthetic enzymes likely have broad substrate specificity, and thus, there might be a metabolic grid from a precursor to phomopsin A. The enzyme(s) responsible for the biosynthesis of 3,4-dehydrovaline (dVal) have also not been identified yet. Finally, phomM acts as an S-adenosylmethionine-dependent alpha-N-methyltransferase that catalyzes two successive N-methylation reactions, converting N-desmethyl-phomopsin A to phomopsin A and phomopsin A further to an N,N-dimethylated congener called phomopsin E. This chain is Short-chain dehydrogenase/reductase PhomF', found in Diaporthe leptostromiformis (Lupinosis disease fungus).